A 396-amino-acid polypeptide reads, in one-letter code: DNA polymerase IV (396 aa).

Residues 5–192 (IFHVDVNSAF…LPVGELFMVG (188 aa)) enclose the UmuC domain. Residues aspartate 9 and aspartate 111 each contribute to the Mg(2+) site. Glutamate 112 is a catalytic residue.

Belongs to the DNA polymerase type-Y family. Monomer. Mg(2+) serves as cofactor.

The protein resides in the cytoplasm. The enzyme catalyses DNA(n) + a 2'-deoxyribonucleoside 5'-triphosphate = DNA(n+1) + diphosphate. In terms of biological role, poorly processive, error-prone DNA polymerase involved in untargeted mutagenesis. Copies undamaged DNA at stalled replication forks, which arise in vivo from mismatched or misaligned primer ends. These misaligned primers can be extended by PolIV. Exhibits no 3'-5' exonuclease (proofreading) activity. May be involved in translesional synthesis, in conjunction with the beta clamp from PolIII. The chain is DNA polymerase IV from Clostridium acetobutylicum (strain ATCC 824 / DSM 792 / JCM 1419 / IAM 19013 / LMG 5710 / NBRC 13948 / NRRL B-527 / VKM B-1787 / 2291 / W).